A 200-amino-acid chain; its full sequence is Probable nicotinate-nucleotide adenylyltransferase (200 aa).

It belongs to the NadD family.

The catalysed reaction is nicotinate beta-D-ribonucleotide + ATP + H(+) = deamido-NAD(+) + diphosphate. Its pathway is cofactor biosynthesis; NAD(+) biosynthesis; deamido-NAD(+) from nicotinate D-ribonucleotide: step 1/1. Catalyzes the reversible adenylation of nicotinate mononucleotide (NaMN) to nicotinic acid adenine dinucleotide (NaAD). This Clostridium tetani (strain Massachusetts / E88) protein is Probable nicotinate-nucleotide adenylyltransferase.